The chain runs to 683 residues: Protein kinase C eta type (683 aa).

Residues 1 to 118 (MSSGTMKFNG…LRTTGASDTF (118 aa)) enclose the C2 domain. Phosphoserine; by autocatalysis occurs at positions 28 and 32. 2 Phorbol-ester/DAG-type zinc fingers span residues 171-222 (GHKF…VTAC) and 245-295 (PHKF…APNC). At Ser317 the chain carries Phosphoserine. A disordered region spans residues 320 to 342 (SKLVSRSTLRRQGKESSKEGNGI). The Protein kinase domain maps to 355 to 614 (FEFIRVLGKG…EHAILRHPFF (260 aa)). Residues 361–369 (LGKGSFGKV) and Lys384 contribute to the ATP site. The Proton acceptor role is filled by Asp479. Thr513 bears the Phosphothreonine; by PDPK1 mark. The 69-residue stretch at 615 to 683 (KEIDWAQLNH…FSYVSPELQP (69 aa)) folds into the AGC-kinase C-terminal domain. Phosphothreonine is present on Thr656. A Phosphoserine modification is found at Ser675.

This sequence belongs to the protein kinase superfamily. AGC Ser/Thr protein kinase family. PKC subfamily. In terms of assembly, interacts with FYN. Interacts with RALA. Interacts with DGKQ. Interacts with PRKCH upstream open reading frame 2; the interaction leads to inhibition of kinase activity. As to expression, most abundant in lung, less in heart and skin.

Its subcellular location is the cytoplasm. It catalyses the reaction L-seryl-[protein] + ATP = O-phospho-L-seryl-[protein] + ADP + H(+). The catalysed reaction is L-threonyl-[protein] + ATP = O-phospho-L-threonyl-[protein] + ADP + H(+). Its activity is regulated as follows. Novel PKCs (PRKCD, PRKCE, PRKCH and PRKCQ) are calcium-insensitive, but activated by diacylglycerol (DAG) and phosphatidylserine. Three specific sites; Thr-513 (activation loop of the kinase domain), Thr-656 (turn motif) and Ser-675 (hydrophobic region), need to be phosphorylated for its full activation. Inhibited by PRKCH upstream open reading frame 2. In terms of biological role, calcium-independent, phospholipid- and diacylglycerol (DAG)-dependent serine/threonine-protein kinase that is involved in the regulation of cell differentiation in keratinocytes and pre-B cell receptor, mediates regulation of epithelial tight junction integrity and foam cell formation, and is required for glioblastoma proliferation and apoptosis prevention in MCF-7 cells. In keratinocytes, binds and activates the tyrosine kinase FYN, which in turn blocks epidermal growth factor receptor (EGFR) signaling and leads to keratinocyte growth arrest and differentiation. Associates with the cyclin CCNE1-CDK2-CDKN1B complex and inhibits CDK2 kinase activity, leading to RB1 dephosphorylation and thereby G1 arrest in keratinocytes. In association with RALA activates actin depolymerization, which is necessary for keratinocyte differentiation. In the pre-B cell receptor signaling, functions downstream of BLNK by up-regulating IRF4, which in turn activates L chain gene rearrangement. Regulates epithelial tight junctions (TJs) by phosphorylating occludin (OCLN) on threonine residues, which is necessary for the assembly and maintenance of TJs. In association with PLD2 and via TLR4 signaling, is involved in lipopolysaccharide (LPS)-induced RGS2 down-regulation and foam cell formation. Upon PMA stimulation, mediates glioblastoma cell proliferation by activating the mTOR pathway, the PI3K/AKT pathway and the ERK1-dependent phosphorylation of ELK1. Involved in the protection of glioblastoma cells from irradiation-induced apoptosis by preventing caspase-9 activation. In camptothecin-treated MCF-7 cells, regulates NF-kappa-B upstream signaling by activating IKBKB, and confers protection against DNA damage-induced apoptosis. Promotes oncogenic functions of ATF2 in the nucleus while blocking its apoptotic function at mitochondria. Phosphorylates ATF2 which promotes its nuclear retention and transcriptional activity and negatively regulates its mitochondrial localization. The sequence is that of Protein kinase C eta type (PRKCH) from Homo sapiens (Human).